Consider the following 179-residue polypeptide: ATP-dependent protease subunit HslV (179 aa).

Residue Thr5 is part of the active site. Residues Gly164, Cys167, and Thr170 each contribute to the Na(+) site.

This sequence belongs to the peptidase T1B family. HslV subfamily. In terms of assembly, a double ring-shaped homohexamer of HslV is capped on each side by a ring-shaped HslU homohexamer. The assembly of the HslU/HslV complex is dependent on binding of ATP.

The protein resides in the cytoplasm. The enzyme catalyses ATP-dependent cleavage of peptide bonds with broad specificity.. Allosterically activated by HslU binding. Its function is as follows. Protease subunit of a proteasome-like degradation complex believed to be a general protein degrading machinery. The polypeptide is ATP-dependent protease subunit HslV (Verminephrobacter eiseniae (strain EF01-2)).